The following is a 192-amino-acid chain: Leucine-rich repeat-containing protein 51 (192 aa).

3 LRR repeats span residues 49–71 (SLTQ…NQVA), 80–101 (NLAW…LTTF), and 103–124 (NLSV…NKLA). The 39-residue stretch at 137–175 (NPMEEEKGYRQYVLCTLSRITTFDFAGVTKADRTTAEVW) folds into the LRRCT domain.

Its subcellular location is the cytoplasm. This is Leucine-rich repeat-containing protein 51 from Pan troglodytes (Chimpanzee).